Consider the following 533-residue polypeptide: 2,3-bisphosphoglycerate-independent phosphoglycerate mutase (533 aa).

The Mn(2+) site is built by Asp15 and Ser65. Ser65 (phosphoserine intermediate) is an active-site residue. Residues His126, Arg156–Asp157, Arg188, Arg194, Arg258–Arg261, and Lys331 contribute to the substrate site. Mn(2+) is bound by residues Asp398, His402, Asp439, His440, and His457.

The protein belongs to the BPG-independent phosphoglycerate mutase family. In terms of assembly, monomer. It depends on Mn(2+) as a cofactor.

It carries out the reaction (2R)-2-phosphoglycerate = (2R)-3-phosphoglycerate. It participates in carbohydrate degradation; glycolysis; pyruvate from D-glyceraldehyde 3-phosphate: step 3/5. Its function is as follows. Catalyzes the interconversion of 2-phosphoglycerate and 3-phosphoglycerate. The sequence is that of 2,3-bisphosphoglycerate-independent phosphoglycerate mutase from Trichormus variabilis (strain ATCC 29413 / PCC 7937) (Anabaena variabilis).